Here is a 703-residue protein sequence, read N- to C-terminus: WD repeat-containing protein pop2 (703 aa).

Polar residues-rich tracts occupy residues 1-27 (MSLSRCPTDNSSSRINSSVPLINSSSP), 63-73 (ESNSCNGNTSS), and 156-178 (SISSNSDNFPPSPKVDTSNTVSP). 2 disordered regions span residues 1 to 73 (MSLS…NTSS) and 156 to 180 (SISSNSDNFPPSPKVDTSNTVSPGS). The interval 1–170 (MSLSRCPTDN…SDNFPPSPKV (170 aa)) is interaction with pop1. Positions 236–283 (KDILSNLPFSIVQSILLNLDIHSFLSCRLVSPTWNRILDVHTSYWKHM) constitute an F-box domain. 6 WD repeats span residues 389–417 (GHKEGVWAVKIHENTLVSGSIDKTVRVWN), 429–473 (GHIS…RVWK), 505–533 (GHTDSVRTISGYGDILVSGSYDSSIRIWR), 545–575 (GHSLRIYSVLYEPERNICISGSMDKSIRVWD), 587–615 (GHDAFVTLLNVFQNRLISGSADSTIRIWD), and 625–654 (LPSNSGYISSFVSDEHKIISGNDGSVKLWD).

As to quaternary structure, homodimer and heterodimer with pop1. Binds to cul1, pip1 and phosphorylated cdc18.

The protein localises to the cytoplasm. Its subcellular location is the nucleus. Its function is as follows. Involved in maintenance of ploidy through proteasome dependent degradation of CDK inhibitor rum1 and S-phase initiator cdc18. Functions as a recognition factor for rum1 and cdc18, which are subsequently ubiquitinated and targeted to the 26S proteasome for degradation. Together with pop1, required for cig2 instability during G2 and M phase and cig2 degradation in exponentially growing cells. This Schizosaccharomyces pombe (strain 972 / ATCC 24843) (Fission yeast) protein is WD repeat-containing protein pop2 (pop2).